Here is a 199-residue protein sequence, read N- to C-terminus: MAYALPNLPYDYTALEPCISKSTLEFHHDKHHAAYVNNFNNAVAGTDLDNQSIEDVIKAVAGDASKAGIFNNAAQAWNHSFYWNCMKPGGGGQPSGALADKINADFGSFDAFVEAFKQAGATQFGSGWAWLVLDNGTLKVTKTGNAENPMTAGQTPLLTMDVWEHAYYLDYQNRRPDYIADFLGKLVNWDFVAANLAAA.

Fe cation is bound by residues His-27, His-79, Asp-161, and His-165.

Belongs to the iron/manganese superoxide dismutase family. As to quaternary structure, homodimer. Requires Fe cation as cofactor.

It catalyses the reaction 2 superoxide + 2 H(+) = H2O2 + O2. In terms of biological role, destroys superoxide anion radicals which are normally produced within the cells and which are toxic to biological systems. This is Superoxide dismutase [Fe] (sodB) from Synechocystis sp. (strain ATCC 27184 / PCC 6803 / Kazusa).